The following is a 293-amino-acid chain: MKEAEVLKYEAFTSSPGKGNPAGVVLQGDDYTEDEMQIIAERAGYSETSFIRKSESADLELRYFTPGHEMNLCGHATVASLYALCEKGMLESGKTYSIQTKAGILPVKISEKDGRIHITLEQASPQFKPFTGDRKKLADALGITDEDFHEDLPIVFGSTGIWTAIVPLKSLEASKKMVPDNKQFPEVLVDLPKASVHPFTFETVHPDSDLHGRHFSSPYSGTIEDPVTGTASGVMGAYMKHYGNAEQHKFIIEQGQEIGKDGKVEIEMNEAGGHVKVNMTGTAVYSETRILKI.

Residue E47 is part of the active site.

It belongs to the PhzF family.

This is an uncharacterized protein from Bacillus subtilis (strain 168).